The sequence spans 87 residues: Beta-defensin 109 (87 aa).

The signal sequence occupies residues 1-22; that stretch reads MRLHLLLLILLLFSILLSPVRG. Disulfide bonds link Cys-31/Cys-59, Cys-38/Cys-53, and Cys-43/Cys-60.

It belongs to the beta-defensin family.

It is found in the secreted. Has antibacterial activity. This chain is Beta-defensin 109 (DEFB109), found in Pan troglodytes (Chimpanzee).